We begin with the raw amino-acid sequence, 95 residues long: Aspartyl/glutamyl-tRNA(Asn/Gln) amidotransferase subunit C (95 aa).

Belongs to the GatC family. In terms of assembly, heterotrimer of A, B and C subunits.

It carries out the reaction L-glutamyl-tRNA(Gln) + L-glutamine + ATP + H2O = L-glutaminyl-tRNA(Gln) + L-glutamate + ADP + phosphate + H(+). The catalysed reaction is L-aspartyl-tRNA(Asn) + L-glutamine + ATP + H2O = L-asparaginyl-tRNA(Asn) + L-glutamate + ADP + phosphate + 2 H(+). Functionally, allows the formation of correctly charged Asn-tRNA(Asn) or Gln-tRNA(Gln) through the transamidation of misacylated Asp-tRNA(Asn) or Glu-tRNA(Gln) in organisms which lack either or both of asparaginyl-tRNA or glutaminyl-tRNA synthetases. The reaction takes place in the presence of glutamine and ATP through an activated phospho-Asp-tRNA(Asn) or phospho-Glu-tRNA(Gln). This is Aspartyl/glutamyl-tRNA(Asn/Gln) amidotransferase subunit C from Azotobacter vinelandii (strain DJ / ATCC BAA-1303).